Reading from the N-terminus, the 303-residue chain is Recombination-associated protein RdgC (303 aa).

Belongs to the RdgC family.

It is found in the cytoplasm. It localises to the nucleoid. Functionally, may be involved in recombination. The polypeptide is Recombination-associated protein RdgC (Salmonella newport (strain SL254)).